The chain runs to 348 residues: tRNA N6-adenosine threonylcarbamoyltransferase (348 aa).

Residues histidine 116 and histidine 120 each contribute to the Fe cation site. Substrate-binding positions include 138–142 (QVSGG), aspartate 171, glycine 184, aspartate 188, and asparagine 277. Aspartate 309 contributes to the Fe cation binding site.

It belongs to the KAE1 / TsaD family. Requires Fe(2+) as cofactor.

The protein resides in the cytoplasm. The enzyme catalyses L-threonylcarbamoyladenylate + adenosine(37) in tRNA = N(6)-L-threonylcarbamoyladenosine(37) in tRNA + AMP + H(+). Its function is as follows. Required for the formation of a threonylcarbamoyl group on adenosine at position 37 (t(6)A37) in tRNAs that read codons beginning with adenine. Is involved in the transfer of the threonylcarbamoyl moiety of threonylcarbamoyl-AMP (TC-AMP) to the N6 group of A37, together with TsaE and TsaB. TsaD likely plays a direct catalytic role in this reaction. The sequence is that of tRNA N6-adenosine threonylcarbamoyltransferase from Lactobacillus gasseri (strain ATCC 33323 / DSM 20243 / BCRC 14619 / CIP 102991 / JCM 1131 / KCTC 3163 / NCIMB 11718 / NCTC 13722 / AM63).